A 391-amino-acid chain; its full sequence is DNA-directed RNA polymerase subunit Rpo1C (391 aa).

Belongs to the RNA polymerase beta' chain family. As to quaternary structure, part of the RNA polymerase complex.

It is found in the cytoplasm. It carries out the reaction RNA(n) + a ribonucleoside 5'-triphosphate = RNA(n+1) + diphosphate. Its function is as follows. DNA-dependent RNA polymerase (RNAP) catalyzes the transcription of DNA into RNA using the four ribonucleoside triphosphates as substrates. Forms part of the jaw domain. This Thermococcus onnurineus (strain NA1) protein is DNA-directed RNA polymerase subunit Rpo1C.